Consider the following 476-residue polypeptide: Probable serine carboxypeptidase CPVL (476 aa).

The first 22 residues, 1-22 (MVGAMWKVIVSLVLLMPGPCDG), serve as a signal peptide directing secretion. Residues N81 and N132 are each glycosylated (N-linked (GlcNAc...) asparagine). S204 is an active-site residue. Residues N307 and N346 are each glycosylated (N-linked (GlcNAc...) asparagine). Residues D388 and H448 contribute to the active site.

This sequence belongs to the peptidase S10 family. Expressed in macrophages but not in other leukocytes. Abundantly expressed in heart and kidney. Also expressed in spleen, leukocytes, and placenta.

In terms of biological role, may be involved in the digestion of phagocytosed particles in the lysosome, participation in an inflammatory protease cascade, and trimming of peptides for antigen presentation. This is Probable serine carboxypeptidase CPVL (CPVL) from Homo sapiens (Human).